We begin with the raw amino-acid sequence, 209 residues long: Ubiquinone biosynthesis protein COQ4 homolog 2, mitochondrial (209 aa).

His-118, Asp-119, His-122, and Glu-134 together coordinate Zn(2+).

This sequence belongs to the COQ4 family. As to quaternary structure, component of a multi-subunit COQ enzyme complex. It depends on Zn(2+) as a cofactor.

The protein resides in the mitochondrion inner membrane. The catalysed reaction is a 4-hydroxy-3-methoxy-5-(all-trans-polyprenyl)benzoate + H(+) = a 2-methoxy-6-(all-trans-polyprenyl)phenol + CO2. It functions in the pathway cofactor biosynthesis; ubiquinone biosynthesis. In terms of biological role, lyase that catalyzes the C1-decarboxylation of 4-hydroxy-3-methoxy-5-(all-trans-polyprenyl)benzoic acid into 2-methoxy-6-(all-trans-polyprenyl)phenol during ubiquinone biosynthesis. This Paramecium tetraurelia protein is Ubiquinone biosynthesis protein COQ4 homolog 2, mitochondrial.